A 632-amino-acid polypeptide reads, in one-letter code: Arginyl-tRNA--protein transferase 1 (632 aa).

Over residues 1–18 the composition is skewed to polar residues; sequence MSLKNDASSSHDGGSNRE. Disordered stretches follow at residues 1–27, 113–144, 284–312, and 517–580; these read MSLK…HGRR, KLDV…AKSE, NGNI…HQAR, and PAAS…NDIN. The span at 113-122 shows a compositional bias: basic and acidic residues; the sequence is KLDVQPREQR. Polar residues predominate over residues 285–296; sequence GNISRGANSLDG. Residues 298 to 310 are compositionally biased toward basic and acidic residues; it reads ETLHAKKDSENHQ. Over residues 538-563 the composition is skewed to acidic residues; that stretch reads SDEDEDEDEDDDDDDDDDEEMYETES. Positions 564-578 are enriched in basic and acidic residues; that stretch reads EDSHIESDPGSKDND.

Belongs to the R-transferase family.

It carries out the reaction an N-terminal L-alpha-aminoacyl-[protein] + L-arginyl-tRNA(Arg) = an N-terminal L-arginyl-L-aminoacyl-[protein] + tRNA(Arg) + H(+). Involved in the post-translational conjugation of arginine to the N-terminal aspartate or glutamate of a protein. This arginylation is required for degradation of the protein via the ubiquitin pathway. Component of the N-end rule pathway with ATE2 and PRT6. The N-end rule pathway regulates seed after-ripening, seedling sugar sensitivity, seedling lipid breakdown, and abscisic acid (ABA) sensitivity of germination. The end-rule pathway regulates various aspects of leaf and shoot development. Involved in the oxygen-dependent N-arginylation of RAP2-12, an activator of hypoxic gene expression. This N-terminal modification leads to ubiquitination by PRT6 and subsequent degradation of RAP2-12 under aerobic conditions. Has an important role in the progression of leaf senescence. Involved in disease resistance. The end-rule pathway plays a role in regulating the timing and amplitude of the immune response following infection with the bacterial pathogen Pseudomonas syringae pv tomato. Regulates the biosynthesis of plant-defense metabolites such as glucosinolates, and the biosynthesis and response to the phytohormone jasmonate (JA), which plays a key role in plant immunity. This Arabidopsis thaliana (Mouse-ear cress) protein is Arginyl-tRNA--protein transferase 1.